Consider the following 239-residue polypeptide: Small ribosomal subunit protein uS3 (239 aa).

One can recognise a KH type-2 domain in the interval 39 to 107; sequence IREFIKEECK…ELHLNIVEVR (69 aa). Residues 212 to 221 show a composition bias toward basic and acidic residues; that stretch reads PQARDRKAQE. Residues 212–239 form a disordered region; sequence PQARDRKAQELQDGPAPRGAGGNRRGDR. Gly residues predominate over residues 230-239; the sequence is GAGGNRRGDR.

This sequence belongs to the universal ribosomal protein uS3 family. In terms of assembly, part of the 30S ribosomal subunit. Forms a tight complex with proteins S10 and S14.

Binds the lower part of the 30S subunit head. Binds mRNA in the 70S ribosome, positioning it for translation. This is Small ribosomal subunit protein uS3 from Ruegeria sp. (strain TM1040) (Silicibacter sp.).